The sequence spans 206 residues: LexA repressor (206 aa).

A DNA-binding region (H-T-H motif) is located at residues 28–48 (RAEIATRLGFKSANAAEEHLK). Active-site for autocatalytic cleavage activity residues include S123 and K160.

The protein belongs to the peptidase S24 family. Homodimer.

The catalysed reaction is Hydrolysis of Ala-|-Gly bond in repressor LexA.. Represses a number of genes involved in the response to DNA damage (SOS response), including recA and lexA. In the presence of single-stranded DNA, RecA interacts with LexA causing an autocatalytic cleavage which disrupts the DNA-binding part of LexA, leading to derepression of the SOS regulon and eventually DNA repair. In Shewanella sp. (strain MR-4), this protein is LexA repressor.